We begin with the raw amino-acid sequence, 340 residues long: Phosphoribosylformylglycinamidine cyclo-ligase (340 aa).

It belongs to the AIR synthase family.

Its subcellular location is the cytoplasm. The catalysed reaction is 2-formamido-N(1)-(5-O-phospho-beta-D-ribosyl)acetamidine + ATP = 5-amino-1-(5-phospho-beta-D-ribosyl)imidazole + ADP + phosphate + H(+). The protein operates within purine metabolism; IMP biosynthesis via de novo pathway; 5-amino-1-(5-phospho-D-ribosyl)imidazole from N(2)-formyl-N(1)-(5-phospho-D-ribosyl)glycinamide: step 2/2. The sequence is that of Phosphoribosylformylglycinamidine cyclo-ligase from Streptococcus agalactiae serotype III (strain NEM316).